A 509-amino-acid polypeptide reads, in one-letter code: Maturase K (509 aa).

Belongs to the intron maturase 2 family. MatK subfamily.

The protein localises to the plastid. It is found in the chloroplast. Usually encoded in the trnK tRNA gene intron. Probably assists in splicing its own and other chloroplast group II introns. The polypeptide is Maturase K (Galbulimima belgraveana (Northern pigeonberry ash)).